Reading from the N-terminus, the 293-residue chain is MTTAACRKCRDEVIWWAFFINIGQTTYKGVLGVLSGSAALVADAMHSGADVVATLVTMFSVKVSDKKADEKYPFGYGNIQFIASSIVGLILFFGALYLMYESTMQIIAGNTSSPSPFAVLGAIVSIATNELMFRYQSCVGRQNNSPAIIANAWDNRSDALSSVAVLIGIVAAVVGFPIADRLAAIGVGILVAKIGIELNIDAINGLMDTSVENDVLVDAYNIAKDSQHVHGVHYIRGRNVGEDVHLDINIYVDADLKVFESDLVADAIRRKIEAEVDHVRDVHVGVTPVRIAA.

The Cytoplasmic portion of the chain corresponds to 1 to 12 (MTTAACRKCRDE). Positions 1–214 (MTTAACRKCR…GLMDTSVEND (214 aa)) are transmembrane domain (TMD). Residues 13 to 33 (VIWWAFFINIGQTTYKGVLGV) form a helical membrane-spanning segment. Topologically, residues 34 to 78 (LSGSAALVADAMHSGADVVATLVTMFSVKVSDKKADEKYPFGYGN) are lumenal. Residues 79–99 (IQFIASSIVGLILFFGALYLM) form a helical membrane-spanning segment. At 100–105 (YESTMQ) the chain is on the cytoplasmic side. The helical transmembrane segment at 106-126 (IIAGNTSSPSPFAVLGAIVSI) threads the bilayer. The Lumenal segment spans residues 127-158 (ATNELMFRYQSCVGRQNNSPAIIANAWDNRSD). The chain crosses the membrane as a helical span at residues 159–179 (ALSSVAVLIGIVAAVVGFPIA). Topologically, residues 180 to 293 (DRLAAIGVGI…VGVTPVRIAA (114 aa)) are cytoplasmic. A C-terminal domain (CTD) region spans residues 215-293 (VLVDAYNIAK…VGVTPVRIAA (79 aa)). Residues His-245, Asp-247, and His-283 each contribute to the Zn(2+) site.

This sequence belongs to the cation diffusion facilitator (CDF) transporter (TC 2.A.4) family. As to quaternary structure, the isolated C-terminal domain (approximately 213-293) forms homodimers. Forms heterodimers with MamM.

It localises to the magnetosome membrane. Functionally, plays a dual, essential role in magnetosome formation; required for magnetosome vesicle formation as well as biomineralization. Probably binds and transports iron. Requires heterodimerization with MamM for stability. The sequence is that of Magnetosome protein MamB (mamB) from Magnetospira sp. (strain QH-2) (Marine magnetic spirillum (strain QH-2)).